Consider the following 318-residue polypeptide: Olfactory receptor 52D1 (318 aa).

Over 1–28 (MSDSNLSDNHLPDTFFLTGIPGLEAAHF) the chain is Extracellular. Asn5 carries an N-linked (GlcNAc...) asparagine glycan. The helical transmembrane segment at 29–49 (WIAIPFCAMYLVALVGNAALI) threads the bilayer. The Cytoplasmic segment spans residues 50–57 (LVIAMDNA). The chain crosses the membrane as a helical span at residues 58-78 (LHAPMYLFLCLLSLTDLALSS). The Extracellular segment spans residues 79-102 (TTVPKMLAILWLHAGEISFGGCLA). Cys100 and Cys192 form a disulfide bridge. The chain crosses the membrane as a helical span at residues 103–123 (QMFCVHSIYALESSILLAMAF). Topologically, residues 124–142 (DRYVAICNPLRYTTILNHA) are cytoplasmic. The chain crosses the membrane as a helical span at residues 143–163 (VIGRIGFVGLFRSVAIVSPFI). Residues 164-199 (FLLRRLPYCGHRVMTHTYCEHMGIARLACANITVNI) lie on the Extracellular side of the membrane. A helical transmembrane segment spans residues 200–220 (VYGLTVALLAMGLDSILIAIS). Over 221-240 (YGFILHAVFHLPSHDAQHKA) the chain is Cytoplasmic. A helical transmembrane segment spans residues 241-261 (LSTCGSHIGIILVFYIPAFFS). At 262–277 (FLTHRFGHHEVPKHVH) the chain is on the extracellular side. A helical membrane pass occupies residues 278 to 298 (IFLANLYVLVPPVLNPILYGA). The Cytoplasmic segment spans residues 299–318 (RTKEIRSRLLKLLHLGKTSI).

This sequence belongs to the G-protein coupled receptor 1 family.

It is found in the cell membrane. In terms of biological role, odorant receptor. This chain is Olfactory receptor 52D1 (OR52D1), found in Homo sapiens (Human).